A 351-amino-acid polypeptide reads, in one-letter code: Glycerol-3-phosphate dehydrogenase [NAD(P)+] (351 aa).

Residues Ser-18, Trp-19, Arg-38, and Lys-122 each coordinate NADPH. Sn-glycerol 3-phosphate-binding residues include Lys-122, Gly-153, and Ser-155. Ala-157 contacts NADPH. The sn-glycerol 3-phosphate site is built by Lys-208, Asp-261, Ser-271, Arg-272, and Asn-273. Lys-208 (proton acceptor) is an active-site residue. Residue Arg-272 participates in NADPH binding. Glu-297 serves as a coordination point for NADPH.

The protein belongs to the NAD-dependent glycerol-3-phosphate dehydrogenase family.

The protein resides in the cytoplasm. It catalyses the reaction sn-glycerol 3-phosphate + NAD(+) = dihydroxyacetone phosphate + NADH + H(+). The catalysed reaction is sn-glycerol 3-phosphate + NADP(+) = dihydroxyacetone phosphate + NADPH + H(+). It functions in the pathway membrane lipid metabolism; glycerophospholipid metabolism. Catalyzes the reduction of the glycolytic intermediate dihydroxyacetone phosphate (DHAP) to sn-glycerol 3-phosphate (G3P), the key precursor for phospholipid synthesis. The polypeptide is Glycerol-3-phosphate dehydrogenase [NAD(P)+] (Bordetella parapertussis (strain 12822 / ATCC BAA-587 / NCTC 13253)).